The following is a 338-amino-acid chain: Ferredoxin--NADP reductase (338 aa).

FAD-binding residues include Asp-35, Gln-43, Tyr-48, Ala-88, Phe-122, Asp-289, and Thr-330.

It belongs to the ferredoxin--NADP reductase type 2 family. As to quaternary structure, homodimer. Requires FAD as cofactor.

It catalyses the reaction 2 reduced [2Fe-2S]-[ferredoxin] + NADP(+) + H(+) = 2 oxidized [2Fe-2S]-[ferredoxin] + NADPH. This chain is Ferredoxin--NADP reductase, found in Ehrlichia canis (strain Jake).